A 318-amino-acid polypeptide reads, in one-letter code: Protease HtpX homolog (318 aa).

The next 3 helical transmembrane spans lie at 1 to 21 (MLEA…VGRL), 35 to 55 (ILGL…GSAI), and 56 to 76 (AGLV…SRIV). H167 contributes to the Zn(2+) binding site. Residue E168 is part of the active site. H171 is a Zn(2+) binding site. The next 2 helical transmembrane spans lie at 178-198 (LVMT…DPWL) and 209-229 (IAFL…LVAA). E235 contributes to the Zn(2+) binding site.

It belongs to the peptidase M48B family. Zn(2+) serves as cofactor.

It localises to the cell membrane. This Methanopyrus kandleri (strain AV19 / DSM 6324 / JCM 9639 / NBRC 100938) protein is Protease HtpX homolog.